A 270-amino-acid chain; its full sequence is MLPYPQIDPVAVAIGPLQIHWYGLMYLVGIGGAWLLASRRLNKFDPTWTKEKLSDLIFWLAMGVIVGGRLGYVLFYDLSAYIANPLLIFEVWKGGMAFHGGFVGVMIAAWWFGKRNGKSFFQLMDFVAPLVPIGLGAGRIGNFINAELWGKPTDVPWAMVFPPFSDPAQLARHPSQLYQFALEGVALFIILNLYARKPRPTMAVSGMFALFYGIFRFVVEFVRVPDAQLGYLAWGWVTMGQILSLPMIIAGLLLIWLAYKRDPSASKAAA.

The next 7 membrane-spanning stretches (helical) occupy residues 10-30 (VAVAIGPLQIHWYGLMYLVGI), 56-76 (LIFWLAMGVIVGGRLGYVLFY), 92-112 (WKGGMAFHGGFVGVMIAAWWF), 120-140 (FFQLMDFVAPLVPIGLGAGRI), 175-195 (SQLYQFALEGVALFIILNLYA), 202-222 (MAVSGMFALFYGIFRFVVEFV), and 237-257 (VTMGQILSLPMIIAGLLLIWL). Residue R139 participates in a 1,2-diacyl-sn-glycero-3-phospho-(1'-sn-glycerol) binding.

It belongs to the Lgt family.

The protein resides in the cell inner membrane. The catalysed reaction is L-cysteinyl-[prolipoprotein] + a 1,2-diacyl-sn-glycero-3-phospho-(1'-sn-glycerol) = an S-1,2-diacyl-sn-glyceryl-L-cysteinyl-[prolipoprotein] + sn-glycerol 1-phosphate + H(+). It participates in protein modification; lipoprotein biosynthesis (diacylglyceryl transfer). Functionally, catalyzes the transfer of the diacylglyceryl group from phosphatidylglycerol to the sulfhydryl group of the N-terminal cysteine of a prolipoprotein, the first step in the formation of mature lipoproteins. In Pseudomonas syringae pv. syringae (strain B728a), this protein is Phosphatidylglycerol--prolipoprotein diacylglyceryl transferase.